The sequence spans 205 residues: Probable GTP-binding protein EngB (205 aa).

Residues 29 to 203 (QGAEIAFIGR…KAVLSQWFSS (175 aa)) enclose the EngB-type G domain. Residues 37–44 (GRSNAGKS), 64–68 (GRTQM), 82–85 (DLPG), 149–152 (TKSD), and 182–184 (FSS) contribute to the GTP site. Mg(2+) contacts are provided by S44 and T66.

Belongs to the TRAFAC class TrmE-Era-EngA-EngB-Septin-like GTPase superfamily. EngB GTPase family. Mg(2+) serves as cofactor.

Its function is as follows. Necessary for normal cell division and for the maintenance of normal septation. The protein is Probable GTP-binding protein EngB of Coxiella burnetii (strain CbuK_Q154) (Coxiella burnetii (strain Q154)).